The following is a 542-amino-acid chain: MDDKIALTSNDGERPRMKKDWRFWTIFAALMLIAFLAALDMTMISTALPAIVAALPPSSIAANWITSAFLLPMVASQPIFGGLSCSLGRKNSVISALVIFLVGSIVCATAKSVLVLVVGRGVQGLGGGGIHALSEIIMSDLTTLRERGVYFGLIALVFAVAGFIAPVLGGVFSHSSWPWIFWINLPIGAVALVLLVLFLNIRVPLLTGRQKWEKLDLVGNAILFGSVTAVLIAVTEGGIKYRWSDARVWVPLVVGLIGLVAFLMVEWIPGPLCRQPVFPRDLFANRTAAVAYLQTFLHGVIFYGIIYMVPIYFQAIKDRTPLQSAIWSFPLTAPSTPLALIAGLLISISGRYKKLIFIGWALMAGGVGWLTHWSVGTSKAEWAISQIIAGAGIGIMFPITLPPIQASLPVERLEAATAAYAFSRTFGAVWGITGATTIFATQAAKKLRPDYGQLEPLGLNDFTVIAFAESLRYLPEQLQVLVKKVYADAISDSFWLFVPLAIIGFASTFLLKDLPLPDFIKSQAVLEEKGASENASPPESLA.

The next 8 membrane-spanning stretches (helical) occupy residues 24-44 (WTIF…MTMI), 51-71 (IVAA…AFLL), 98-118 (VIFL…VLVV), 124-144 (GLGG…LTTL), 151-171 (FGLI…LGGV), 179-199 (WIFW…VLFL), 215-235 (LDLV…IAVT), and 248-268 (VWVP…VEWI). Asn-285 carries an N-linked (GlcNAc...) asparagine glycan. 6 helical membrane passes run 296–316 (FLHG…FQAI), 326–346 (IWSF…GLLI), 355–375 (LIFI…HWSV), 384–404 (ISQI…LPPI), 419–439 (AYAF…TTIF), and 490–510 (ISDS…STFL).

The protein belongs to the major facilitator superfamily.

Its subcellular location is the cell membrane. Its function is as follows. Glycosyltransferase; part of the gene cluster that mediates the biosynthesis of mannosylerythritol lipids (MELs), surface-active substances that enhance the availability of water-insoluble substrates. MMF1 is directly involved in the secretiopn of MALs. The polypeptide is MFS-type efflux pump MMF1 (Pseudozyma antarctica (strain T-34) (Yeast)).